The following is a 239-amino-acid chain: Leucine-rich repeat-containing protein 57 (239 aa).

Residue glycine 2 is the site of N-myristoyl glycine attachment. LRR repeat units follow at residues 39–60 (NLRT…LIGK), 63–84 (LLKS…ICNL), 86–107 (KLET…FGQL), 109–131 (ALKT…CSLR), 132–153 (HLDV…VGEL), 154–175 (QVIE…ISCC), 177–197 (RLKI…PQSI), and 202–222 (QICL…RELE).

The protein localises to the membrane. The chain is Leucine-rich repeat-containing protein 57 (LRRC57) from Homo sapiens (Human).